Consider the following 371-residue polypeptide: Mannonate dehydratase (371 aa).

This sequence belongs to the mannonate dehydratase family. Fe(2+) is required as a cofactor. It depends on Mn(2+) as a cofactor.

The enzyme catalyses D-mannonate = 2-dehydro-3-deoxy-D-gluconate + H2O. It functions in the pathway carbohydrate metabolism; pentose and glucuronate interconversion. In terms of biological role, catalyzes the dehydration of D-mannonate. In Geobacillus thermodenitrificans (strain NG80-2), this protein is Mannonate dehydratase.